Reading from the N-terminus, the 472-residue chain is Eukaryotic translation initiation factor 2 subunit 3, X-linked (472 aa).

The residue at position 2 (A2) is an N-acetylalanine. S16 bears the Phosphoserine mark. The tr-type G domain maps to 39-248; sequence QATINIGTIG…IVKKIPVPPR (210 aa). A G1 region spans residues 48–55; it reads GHVAHGKS. 51–56 is a GTP binding site; it reads AHGKST. Residues 76–80 form a G2 region; it reads NITIK. The interval 134–137 is G3; the sequence is DCPG. GTP-binding positions include 190-193 and 225-227; these read NKID and SAQ. The tract at residues 190–193 is G4; the sequence is NKID. The segment at 225–227 is G5; it reads SAQ. Positions 457–469 are interacts with Cdc123; that stretch reads GQIRRGVTIKPTV.

The protein belongs to the TRAFAC class translation factor GTPase superfamily. Classic translation factor GTPase family. EIF2G subfamily. Eukaryotic translation initiation factor 2 eIF2 is a heterotrimeric complex composed of an alpha (EIF2S1), a beta (EIF2S2) and a gamma (EIF2S3) chain. eIF2 is member of the 43S pre-initiation complex (43S PIC). Interacts (via C-terminus) with CDC123; the interaction is direct. In terms of tissue distribution, widely expressed. In the brain, high mRNA levels are observed in specific regions, including the habenula, anterodorsal thalamic nucleus, hippocampus, hypothalamus, and cerebellum. Also expressed in the embryonic brain. There is a differential expression between males and females, which is tissue-specific. Females tend to have higher expression levels than males in the brain (cortex, hippocampus and paraventricular nucleus, but not in the habenula), as well as in other tissues. The up-regulation observed in females at the mRNA level may be due to the presence of 2 active copies of the gene.

Its subcellular location is the cytoplasm. It localises to the cytosol. It catalyses the reaction GTP + H2O = GDP + phosphate + H(+). Its function is as follows. Member of the eIF2 complex that functions in the early steps of protein synthesis by forming a ternary complex with GTP and initiator tRNA. This complex binds to a 40S ribosomal subunit, followed by mRNA binding to form the 43S pre-initiation complex (43S PIC). Junction of the 60S ribosomal subunit to form the 80S initiation complex is preceded by hydrolysis of the GTP bound to eIF2 and release of an eIF2-GDP binary complex. In order for eIF2 to recycle and catalyze another round of initiation, the GDP bound to eIF2 must exchange with GTP by way of a reaction catalyzed by eIF-2B. Along with its paralog on chromosome Y, may contribute to spermatogenesis up to the round spermatid stage. The polypeptide is Eukaryotic translation initiation factor 2 subunit 3, X-linked (Eif2s3x) (Mus musculus (Mouse)).